The sequence spans 168 residues: uncharacterized protein (168 aa).

The helical transmembrane segment at 5-24 (IAWASACLLLVMLTGFFTIG) threads the bilayer.

It localises to the membrane. This is an uncharacterized protein from Bacillus subtilis (strain 168).